Reading from the N-terminus, the 461-residue chain is NADH-ubiquinone oxidoreductase chain 4 (461 aa).

13 helical membrane passes run 20-42, 61-81, 93-113, 114-134, 147-167, 197-217, 225-245, 258-278, 285-304, 309-331, 351-371, 393-413, and 436-456; these read PAWL…LTWL, PLST…ILAS, QRSF…AFGA, TEII…LIII, GTYF…ALLM, WTAC…HLWL, PIAG…YGMM, LAYP…SICL, SLIA…GILT, GFTG…FCLA, VILP…LALP, TLTM…HMFL, and LLMT…ELIW.

Belongs to the complex I subunit 4 family.

Its subcellular location is the mitochondrion membrane. The catalysed reaction is a ubiquinone + NADH + 5 H(+)(in) = a ubiquinol + NAD(+) + 4 H(+)(out). Its function is as follows. Core subunit of the mitochondrial membrane respiratory chain NADH dehydrogenase (Complex I) that is believed to belong to the minimal assembly required for catalysis. Complex I functions in the transfer of electrons from NADH to the respiratory chain. The immediate electron acceptor for the enzyme is believed to be ubiquinone. The protein is NADH-ubiquinone oxidoreductase chain 4 (MT-ND4) of Latimeria chalumnae (Coelacanth).